We begin with the raw amino-acid sequence, 363 residues long: Spermidine/putrescine import ATP-binding protein PotA (363 aa).

One can recognise an ABC transporter domain in the interval 6-236; the sequence is VEFKNVIKKY…PINHFVADFI (231 aa). 38-45 contributes to the ATP binding site; it reads GPSGCGKT.

It belongs to the ABC transporter superfamily. Spermidine/putrescine importer (TC 3.A.1.11.1) family. The complex is composed of two ATP-binding proteins (PotA), two transmembrane proteins (PotB and PotC) and a solute-binding protein (PotD).

It localises to the cell membrane. It catalyses the reaction ATP + H2O + polyamine-[polyamine-binding protein]Side 1 = ADP + phosphate + polyamineSide 2 + [polyamine-binding protein]Side 1.. Part of the ABC transporter complex PotABCD involved in spermidine/putrescine import. Responsible for energy coupling to the transport system. This Latilactobacillus sakei subsp. sakei (strain 23K) (Lactobacillus sakei subsp. sakei) protein is Spermidine/putrescine import ATP-binding protein PotA.